The following is a 330-amino-acid chain: MNPALPEDVKNLLTDLETFILDVLKGETLSKKAKEKKEVLIKRLKDIKHSYPQDFQDKAETDDQEENDGFSLPPDAVSIASDRDKDEELPYDGSFYPSVAAQDLDYLRAGYLEKRRKDHSFFASEWQKRWCVLTNSMFYYYGSDKDKQQKGAFSLDGYRAKMNDTLRKDAKKDCCFEILAPDKRVYQFAASSPKEAEEWINVIMNARGNIPSEDEELYDDVNQEMDASHEEDIYEELPEESEKPVTGSETPKATPVPVNNTSGKENTDYANFYRGLWDCNGDHPDELSFKYGDTIYILSKEYNTYGWWVGEMKGTIGLVPKAYIIEMYDI.

Positions 53–77 (QDFQDKAETDDQEENDGFSLPPDAV) are disordered. Residues 105-208 (DYLRAGYLEK…WINVIMNARG (104 aa)) form the PH domain. A disordered region spans residues 228–261 (SHEEDIYEELPEESEKPVTGSETPKATPVPVNNT). Residues 247-261 (GSETPKATPVPVNNT) are compositionally biased toward polar residues. The region spanning 268 to 329 (DYANFYRGLW…PKAYIIEMYD (62 aa)) is the SH3 domain.

This sequence belongs to the SKAP family. In terms of processing, phosphorylated on tyrosines.

It is found in the cytoplasm. Its function is as follows. May be involved in B-cell and macrophage adhesion processes. May play a role in src signaling pathway. This Xenopus laevis (African clawed frog) protein is Src kinase-associated phosphoprotein 2-A (skap2-a).